The chain runs to 779 residues: Lysosome membrane protein 2-A (779 aa).

Over 1-17 the chain is Cytoplasmic; the sequence is MVKRGCCHRKMVNHKGC. The chain crosses the membrane as a helical span at residues 18–38; that stretch reads LVSGIFLAVIGAVLFILAFAL. Residues 39–732 lie on the Lumenal side of the membrane; the sequence is LPHLINQTTQ…LLNSQFKLIK (694 aa). 19 N-linked (GlcNAc...) asparagine glycosylation sites follow: Asn44, Asn86, Asn95, Asn114, Asn117, Asn201, Asn239, Asn262, Asn266, Asn277, Asn369, Asn410, Asn440, Asn508, Asn543, Asn601, Asn619, Asn651, and Asn693. The helical transmembrane segment at 733–753 threads the bilayer; the sequence is ILGFVPVIVVSIIGGIILIAG. Over 754 to 779 the chain is Cytoplasmic; sequence ISMFAFGFKKLRQQKQQGYQAIINNE. Residues 771 to 774 carry the Tyrosine-type lysosomal sorting signal motif; it reads GYQA.

This sequence belongs to the CD36 family. Post-translationally, heavily glycosylated.

It localises to the lysosome membrane. In terms of biological role, may act as a lysosomal receptor. May be involved in macropinocytosis and fluid phase exocytosis. Binds to the anionic phospholipid phosphoinositol 4,5-bisphosphate, but not to phosphatidylcholine and only weakly to phosphatidylserine. This Dictyostelium discoideum (Social amoeba) protein is Lysosome membrane protein 2-A (lmpA).